The following is a 62-amino-acid chain: uncharacterized protein (62 aa).

It is found in the plastid. Its subcellular location is the chloroplast. This is an uncharacterized protein from Guillardia theta (Cryptophyte).